The sequence spans 191 residues: Guanylate kinase (191 aa).

Positions 6–184 constitute a Guanylate kinase-like domain; it reads GLIIILSSPS…TIQQIHTIIL (179 aa). An ATP-binding site is contributed by 13-20; sequence SPSGAGKS.

Belongs to the guanylate kinase family.

It localises to the cytoplasm. The enzyme catalyses GMP + ATP = GDP + ADP. Its function is as follows. Essential for recycling GMP and indirectly, cGMP. The sequence is that of Guanylate kinase from Rickettsia bellii (strain RML369-C).